Consider the following 132-residue polypeptide: UPF0299 membrane protein YohJ (132 aa).

A run of 4 helical transmembrane segments spans residues 7 to 27 (IIWQ…AGIF), 31 to 51 (LLPV…VLLA), 63 to 83 (GCYV…VGVM), and 93 to 113 (FGPV…VMSW).

Belongs to the UPF0299 family.

The protein localises to the cell inner membrane. The protein is UPF0299 membrane protein YohJ of Shigella dysenteriae serotype 1 (strain Sd197).